A 111-amino-acid polypeptide reads, in one-letter code: Glutaredoxin-C2 (111 aa).

Residues 3 to 103 (MQKAKEIVNS…PLLTEAGAIA (101 aa)) form the Glutaredoxin domain. Residues Cys-23 and Cys-26 are joined by a disulfide bond.

The protein belongs to the glutaredoxin family. CPYC subfamily.

Its subcellular location is the cytoplasm. Functionally, has a glutathione-disulfide oxidoreductase activity in the presence of NADPH and glutathione reductase. Reduces low molecular weight disulfides and proteins. The sequence is that of Glutaredoxin-C2 (GRXC2) from Arabidopsis thaliana (Mouse-ear cress).